Reading from the N-terminus, the 94-residue chain is MFQVNEYFNGTVKSIAFAGEEGPATVGVMAPGEYEFGTAKREIMHVVSGALTVKLPGSDNWETFNAGDKFNVAADSKFQLKVKVDTAYLCEYRD.

This sequence belongs to the nucleoside phosphorylase PpnP family.

It catalyses the reaction a purine D-ribonucleoside + phosphate = a purine nucleobase + alpha-D-ribose 1-phosphate. It carries out the reaction adenosine + phosphate = alpha-D-ribose 1-phosphate + adenine. The catalysed reaction is cytidine + phosphate = cytosine + alpha-D-ribose 1-phosphate. The enzyme catalyses guanosine + phosphate = alpha-D-ribose 1-phosphate + guanine. It catalyses the reaction inosine + phosphate = alpha-D-ribose 1-phosphate + hypoxanthine. It carries out the reaction thymidine + phosphate = 2-deoxy-alpha-D-ribose 1-phosphate + thymine. The catalysed reaction is uridine + phosphate = alpha-D-ribose 1-phosphate + uracil. The enzyme catalyses xanthosine + phosphate = alpha-D-ribose 1-phosphate + xanthine. Catalyzes the phosphorolysis of diverse nucleosides, yielding D-ribose 1-phosphate and the respective free bases. Can use uridine, adenosine, guanosine, cytidine, thymidine, inosine and xanthosine as substrates. Also catalyzes the reverse reactions. In Pseudomonas putida (strain GB-1), this protein is Pyrimidine/purine nucleoside phosphorylase.